The chain runs to 253 residues: Vacuolar v-SNARE NYV1 (253 aa).

Topologically, residues 1-231 (MKRFNVSYVE…EIMWWQKVKN (231 aa)) are cytoplasmic. Residues 147–166 (LNSSGNGQSSNGNGQNTISD) form a disordered region. The span at 148-162 (NSSGNGQSSNGNGQN) shows a compositional bias: low complexity. One can recognise a v-SNARE coiled-coil homology domain in the interval 167 to 227 (IGDATEDQIK…VNIKEIMWWQ (61 aa)). Residues 232-252 (ITLLTFTIILFVSAAFMFFYL) form a helical; Anchor for type IV membrane protein membrane-spanning segment. Position 253 (Trp253) is a topological domain, vacuolar.

It belongs to the synaptobrevin family. As to quaternary structure, present in a pentameric cis-SNARE complex composed of the v-SNAREs NYV1, VTI1 and YKT6, and the t-SNAREs VAM3 and VAM7 on vacuolar membranes. Interacts in trans with the cognate t-SNARE VAM3 during the docking step of homotypic vacuolar fusion. Interacts with the vacuolar transporter chaperone (VTC) complex and the vacuolar Ca(2+)-ATPase PMC1.

It is found in the vacuole membrane. Functionally, vacuolar v-SNARE required for docking. Only involved in homotypic vacuole fusion. Required for Ca(2+) efflux from the vacuolar lumen, a required signal for subsequent membrane fusion events, by inhibiting vacuolar Ca(2+)-ATPase PMC1 and promoting Ca(2+) release when forming trans-SNARE assemblies during the docking step. This chain is Vacuolar v-SNARE NYV1 (NYV1), found in Saccharomyces cerevisiae (strain ATCC 204508 / S288c) (Baker's yeast).